The following is an 80-amino-acid chain: Raniseptin-6 (80 aa).

Positions 1 to 22 (MAFLKKSLFLVLFLGIVSLSIC) are cleaved as a signal peptide. Positions 23 to 49 (EEEKREGEEEEKQEEENEELSEEELRE) are excised as a propeptide.

This sequence belongs to the frog skin active peptide (FSAP) family. Dermaseptin subfamily. In terms of tissue distribution, expressed by the skin glands.

It localises to the secreted. Its function is as follows. Has antibacterial activity. This chain is Raniseptin-6, found in Boana raniceps (Chaco tree frog).